The primary structure comprises 784 residues: LPS-assembly protein LptD (784 aa).

The signal sequence occupies residues 1-24 (MKKRIPTLLATMIASALYSHQGLA). 2 disulfide bridges follow: cysteine 31–cysteine 724 and cysteine 173–cysteine 725.

This sequence belongs to the LptD family. In terms of assembly, component of the lipopolysaccharide transport and assembly complex. Interacts with LptE and LptA. Post-translationally, contains two intramolecular disulfide bonds.

It is found in the cell outer membrane. Together with LptE, is involved in the assembly of lipopolysaccharide (LPS) at the surface of the outer membrane. The chain is LPS-assembly protein LptD from Salmonella typhi.